A 155-amino-acid polypeptide reads, in one-letter code: Ribosomal RNA large subunit methyltransferase H (155 aa).

S-adenosyl-L-methionine-binding positions include L73, G104, and 123-128 (LSPLTL).

The protein belongs to the RNA methyltransferase RlmH family. In terms of assembly, homodimer.

The protein resides in the cytoplasm. It carries out the reaction pseudouridine(1915) in 23S rRNA + S-adenosyl-L-methionine = N(3)-methylpseudouridine(1915) in 23S rRNA + S-adenosyl-L-homocysteine + H(+). Specifically methylates the pseudouridine at position 1915 (m3Psi1915) in 23S rRNA. In Pseudomonas aeruginosa (strain UCBPP-PA14), this protein is Ribosomal RNA large subunit methyltransferase H.